The following is a 244-amino-acid chain: NAD(P)H-quinone oxidoreductase subunit K (244 aa).

[4Fe-4S] cluster is bound by residues C60, C61, C125, and C156.

Belongs to the complex I 20 kDa subunit family. As to quaternary structure, NDH-1 can be composed of about 15 different subunits; different subcomplexes with different compositions have been identified which probably have different functions. [4Fe-4S] cluster is required as a cofactor.

Its subcellular location is the cellular thylakoid membrane. It catalyses the reaction a plastoquinone + NADH + (n+1) H(+)(in) = a plastoquinol + NAD(+) + n H(+)(out). It carries out the reaction a plastoquinone + NADPH + (n+1) H(+)(in) = a plastoquinol + NADP(+) + n H(+)(out). Its function is as follows. NDH-1 shuttles electrons from an unknown electron donor, via FMN and iron-sulfur (Fe-S) centers, to quinones in the respiratory and/or the photosynthetic chain. The immediate electron acceptor for the enzyme in this species is believed to be plastoquinone. Couples the redox reaction to proton translocation, and thus conserves the redox energy in a proton gradient. Cyanobacterial NDH-1 also plays a role in inorganic carbon-concentration. This chain is NAD(P)H-quinone oxidoreductase subunit K, found in Synechococcus sp. (strain CC9902).